We begin with the raw amino-acid sequence, 882 residues long: Valine--tRNA ligase (882 aa).

The 'HIGH' region motif lies at 52-62 (PNVTGSLHMGH). Residues 539–543 (KMSKS) carry the 'KMSKS' region motif. An ATP-binding site is contributed by Lys-542. A coiled-coil region spans residues 816-882 (IDVAAERRRL…RINARLAVLQ (67 aa)).

This sequence belongs to the class-I aminoacyl-tRNA synthetase family. ValS type 1 subfamily. As to quaternary structure, monomer.

It localises to the cytoplasm. The catalysed reaction is tRNA(Val) + L-valine + ATP = L-valyl-tRNA(Val) + AMP + diphosphate. Functionally, catalyzes the attachment of valine to tRNA(Val). As ValRS can inadvertently accommodate and process structurally similar amino acids such as threonine, to avoid such errors, it has a 'posttransfer' editing activity that hydrolyzes mischarged Thr-tRNA(Val) in a tRNA-dependent manner. The chain is Valine--tRNA ligase from Mycolicibacterium paratuberculosis (strain ATCC BAA-968 / K-10) (Mycobacterium paratuberculosis).